Consider the following 198-residue polypeptide: Large ribosomal subunit protein bL25 (198 aa).

This sequence belongs to the bacterial ribosomal protein bL25 family. CTC subfamily. As to quaternary structure, part of the 50S ribosomal subunit; part of the 5S rRNA/L5/L18/L25 subcomplex. Contacts the 5S rRNA. Binds to the 5S rRNA independently of L5 and L18.

Its function is as follows. This is one of the proteins that binds to the 5S RNA in the ribosome where it forms part of the central protuberance. The polypeptide is Large ribosomal subunit protein bL25 (Gloeothece citriformis (strain PCC 7424) (Cyanothece sp. (strain PCC 7424))).